Reading from the N-terminus, the 477-residue chain is Calcium uptake protein 1, mitochondrial (477 aa).

Residues 1–33 (MFRLNALSALAELAVGSRWYHGTSQPTQTKRRL) constitute a mitochondrion transit peptide. Residues 55 to 108 (AHAESPPSVNSKKTDAGDKGKSKDTREVSSHEGSAADTAAEPYPEEKKKKRSGF) form a disordered region. Positions 66–84 (KKTDAGDKGKSKDTREVSS) are enriched in basic and acidic residues. The polybasic region stretch occupies residues 101–112 (KKKKRSGFRDRK). The residue at position 124 (Ser-124) is a Phosphoserine. Residues 128–131 (KIFR) are k/R-ring. One can recognise an EF-hand 1 domain in the interval 220–255 (TPQRNFEIAFKMFDLNGDGEVDMEEFEQVQSIIRSQ). Asp-233, Asn-235, Asp-237, Glu-239, and Glu-244 together coordinate Ca(2+). The tract at residues 261 to 265 (RHRDR) is k/R-ring. Positions 356–376 (KDGKGLTFQEVENFFTFLKNI) constitute an EF-hand 2; degenerate domain. In terms of domain architecture, EF-hand 3 spans 410-445 (LSDHVCDVVFALFDCDGNGELSNKEFVSIMKQRLMR). Ca(2+) contacts are provided by Asp-423, Asp-425, Asn-427, Glu-429, and Glu-434. Arg-457 is modified (asymmetric dimethylarginine). The tract at residues 457–467 (RLMQAMWKCAQ) is C-helix region.

Belongs to the MICU1 family. MICU1 subfamily. Heterodimer; disulfide-linked; heterodimerizes with MICU2 or MICU3. Homodimer; disulfide-linked. Component of the uniplex complex, composed of MCU, EMRE/SMDT1, MICU1 and MICU2 (or MICU3) in a 4:4:1:1 stoichiometry. The composition of calcium sensors within the uniplex complex can differ depending on tissues: a MICU1 homodimer can be present instead of the MICU1-MICU2 heterodimer in skeletal-muscle and kidney. MICU1 is recruited to the uniplex complex by EMRE/SMDT1, and it associates with MCU at low calcium levels, occluding the pore of the MCU channel. Associates with the MICOS complex. Interacts with SLC25A23. Interacts with CHCHD4/MIA40; which introduces the interchain disulfide bond with MICU2. Interacts (when methylated) with UCP2; leading to decrease the calcium sensitivity of MICU1. Post-translationally, phosphorylation at Ser-124 by AKT1 impairs its maturation and stability. Asymmetric dimethylation at Arg-457 by PRMT1 decreases the calcium sensitivity of MICU1 by promoting interaction with UCP2. In terms of processing, degraded by YME1L1 when not complexed as homodimer or heterodimer. Not degraded when complexed as homodimer or heterodimer; the presence of the interchain disulfide bond protecting MICU1 from degradation by YME1L1.

The protein localises to the mitochondrion intermembrane space. Its subcellular location is the mitochondrion inner membrane. Functionally, calcium sensor of the mitochondrial calcium uniporter (MCU) channel, which senses calcium level via its EF-hand domains. MICU1 and MICU2 (or MICU3) form a disulfide-linked heterodimer that stimulates and inhibits MCU activity, depending on the concentration of calcium. At low calcium levels, MICU1 occludes the pore of the MCU channel, preventing mitochondrial calcium uptake. At higher calcium levels, calcium-binding to MICU1 and MICU2 (or MICU3) induces a conformational change that weakens MCU-MICU1 interactions and moves the MICU1-MICU2 heterodimer away from the pore, allowing calcium permeation through the MCU channel. Also required to protect against manganese toxicity by preventing manganese uptake by MCU: mechanistically, manganese-binding to its EF-hand domains does not induce any conformational change, maintaining MCU pore occlusion. Acts as a regulator of mitochondrial cristae structure independently of its ability to regulate the mitochondrial calcium uniporter channel. Regulates glucose-dependent insulin secretion in pancreatic beta-cells by regulating mitochondrial calcium uptake. Induces T-helper 1-mediated autoreactivity, which is accompanied by the release of IFNG. The chain is Calcium uptake protein 1, mitochondrial (Micu1) from Rattus norvegicus (Rat).